A 324-amino-acid polypeptide reads, in one-letter code: Nidogen-1 (324 aa).

In terms of domain architecture, NIDO spans 16–178; the sequence is PFLADLDTTD…GVWVFEIGSP (163 aa). N-linked (GlcNAc...) asparagine glycosylation is present at asparagine 97. Sulfotyrosine is present on residues tyrosine 200 and tyrosine 205. The tract at residues 219 to 259 is disordered; that stretch reads TQPFPSHSPRRGYPDPHNVPRTLAPSYEATERPHGIPTERT. Residues 247–259 are compositionally biased toward basic and acidic residues; the sequence is ATERPHGIPTERT. The EGF-like domain maps to 295-324; it reads SQQTCANNRHQCSVHAECRDYATGFCCRCV. 2 cysteine pairs are disulfide-bonded: cysteine 299–cysteine 312 and cysteine 306–cysteine 321.

In terms of assembly, interacts with FBLN1. Interacts with LGALS3BP. Interacts with PLXDC1. Interacts with SVEP1. In terms of processing, N- and O-glycosylated.

It localises to the secreted. It is found in the extracellular space. The protein resides in the extracellular matrix. The protein localises to the basement membrane. Functionally, sulfated glycoprotein widely distributed in basement membranes and tightly associated with laminin. Also binds to collagen IV and perlecan. It probably has a role in cell-extracellular matrix interactions. The chain is Nidogen-1 (Nid1) from Rattus norvegicus (Rat).